Reading from the N-terminus, the 397-residue chain is Digeranylgeranylglycerophospholipid reductase 3 (397 aa).

FAD is bound by residues Ala16, Asp35, Cys46, Ala47, Gly49, Arg102, Ala126, Asp283, Gly295, and Ile296. Lys338 lines the a 2,3-bis-O-(geranylgeranyl)-sn-glycerol 1-phospholipid pocket.

Belongs to the geranylgeranyl reductase family. DGGGPL reductase subfamily. Requires FAD as cofactor.

The catalysed reaction is a 2,3-bis-O-phytanyl-sn-glycerol 1-phospholipid + 8 A = a 2,3-bis-O-(geranylgeranyl)-sn-glycerol 1-phospholipid + 8 AH2. The enzyme catalyses 2,3-bis-O-(phytanyl)-sn-glycerol 1-phosphate + 8 A = 2,3-bis-O-(geranylgeranyl)-sn-glycerol 1-phosphate + 8 AH2. It catalyses the reaction CDP-2,3-bis-O-(geranylgeranyl)-sn-glycerol + 8 AH2 = CDP-2,3-bis-O-(phytanyl)-sn-glycerol + 8 A. It carries out the reaction archaetidylserine + 8 AH2 = 2,3-bis-O-phytanyl-sn-glycero-3-phospho-L-serine + 8 A. It functions in the pathway membrane lipid metabolism; glycerophospholipid metabolism. Its function is as follows. Is involved in the reduction of 2,3-digeranylgeranylglycerophospholipids (unsaturated archaeols) into 2,3-diphytanylglycerophospholipids (saturated archaeols) in the biosynthesis of archaeal membrane lipids. Catalyzes the formation of archaetidic acid (2,3-di-O-phytanyl-sn-glyceryl phosphate) from 2,3-di-O-geranylgeranylglyceryl phosphate (DGGGP) via the hydrogenation of each double bond of the isoprenoid chains. Is also probably able to reduce double bonds of geranyl groups in CDP-2,3-bis-O-(geranylgeranyl)-sn-glycerol and archaetidylserine, thus acting at various stages in the biosynthesis of archaeal membrane lipids. This Methanosphaera stadtmanae (strain ATCC 43021 / DSM 3091 / JCM 11832 / MCB-3) protein is Digeranylgeranylglycerophospholipid reductase 3.